The primary structure comprises 1405 residues: Centlein (1405 aa).

Positions 1-14 (MAARSPPSPHPSPP) are enriched in pro residues. Residues 1-79 (MAARSPPSPH…GGAAPAHAPL (79 aa)) form a disordered region. Position 2 is an N-acetylalanine (Ala2). Ser5 and Ser22 each carry phosphoserine. Basic and acidic residues predominate over residues 48–58 (VVADESDKIWV). Residues 61-71 (EGSGGRRGPGG) show a composition bias toward gly residues. The stretch at 95–126 (EEAMVTRTQLLEEELSSLKEELALCQADKEFV) forms a coiled coil. 2 disordered regions span residues 421–450 (KLKE…QVPH) and 493–529 (SRKS…EELQ). 2 coiled-coil regions span residues 613–655 (NELA…ELNR) and 681–793 (KNGK…ELIN). The segment at 865–917 (WEDVSESSSDSEAQTSQTLGTIIVETSQKISPTEDGKDQKESDPTEDSQTQGK) is disordered. Polar residues predominate over residues 877 to 895 (AQTSQTLGTIIVETSQKIS). The span at 896–907 (PTEDGKDQKESD) shows a compositional bias: basic and acidic residues. Residues 980–1311 (NIILLRERII…IRELKKMKKN (332 aa)) are a coiled coil. Phosphothreonine is present on Thr1343.

In terms of assembly, interacts with CEP250 and CEP68. Interacts with NEK2; the interaction leads to phosphorylation of CNTLN. Post-translationally, phosphorylated directly or indirectly by NEK2.

It is found in the cytoplasm. Its subcellular location is the cytoskeleton. The protein localises to the microtubule organizing center. It localises to the centrosome. The protein resides in the centriole. Required for centrosome cohesion and recruitment of CEP68 to centrosomes. The protein is Centlein (CNTLN) of Homo sapiens (Human).